A 407-amino-acid chain; its full sequence is Arrestin red cell isoform 1 (407 aa).

The protein belongs to the arrestin family.

The protein resides in the cytoplasm. This chain is Arrestin red cell isoform 1, found in Oncorhynchus mykiss (Rainbow trout).